Consider the following 180-residue polypeptide: Ribosome maturation factor RimM (180 aa).

In terms of domain architecture, PRC barrel spans 108-180 (PDEYYWVDLE…LIVVDWDPDF (73 aa)).

It belongs to the RimM family. As to quaternary structure, binds ribosomal protein uS19.

It localises to the cytoplasm. Its function is as follows. An accessory protein needed during the final step in the assembly of 30S ribosomal subunit, possibly for assembly of the head region. Essential for efficient processing of 16S rRNA. May be needed both before and after RbfA during the maturation of 16S rRNA. It has affinity for free ribosomal 30S subunits but not for 70S ribosomes. This is Ribosome maturation factor RimM from Xanthomonas euvesicatoria pv. vesicatoria (strain 85-10) (Xanthomonas campestris pv. vesicatoria).